A 338-amino-acid polypeptide reads, in one-letter code: O-methyltransferase 4 (338 aa).

The S-adenosyl-L-methionine site is built by Gly-184, Asp-207, Asn-230, Phe-231, Lys-244, and Arg-245. The Proton acceptor role is filled by His-248.

This sequence belongs to the class I-like SAM-binding methyltransferase superfamily. Cation-independent O-methyltransferase family. COMT subfamily.

The enzyme catalyses (3,5-dichloro-2,4,6-trihydroxyphenyl)hexan-1-one + S-adenosyl-L-methionine = 1-(3,5-dichloro-2,6-dihydroxy-4-methoxyphenyl)hexan-1-one + S-adenosyl-L-homocysteine + H(+). This chain is O-methyltransferase 4 (omt4), found in Dictyostelium discoideum (Social amoeba).